A 162-amino-acid polypeptide reads, in one-letter code: Cytochrome c-type biogenesis protein CcmE (162 aa).

Residues 1–8 lie on the Cytoplasmic side of the membrane; the sequence is MNPVRKKR. The helical; Signal-anchor for type II membrane protein transmembrane segment at 9 to 29 threads the bilayer; it reads LIIVLAILVGVGAAVGLALSA. Over 30–162 the chain is Periplasmic; sequence LQQNINLFYT…GETSYNQEGK (133 aa). Heme is bound by residues H124 and Y128. Residues 139–148 show a composition bias toward basic and acidic residues; that stretch reads DSGQLKHYEN. Residues 139 to 162 are disordered; that stretch reads DSGQLKHYENGKAAGETSYNQEGK.

Belongs to the CcmE/CycJ family.

It localises to the cell inner membrane. Its function is as follows. Heme chaperone required for the biogenesis of c-type cytochromes. Transiently binds heme delivered by CcmC and transfers the heme to apo-cytochromes in a process facilitated by CcmF and CcmH. The sequence is that of Cytochrome c-type biogenesis protein CcmE from Pseudomonas paraeruginosa (strain DSM 24068 / PA7) (Pseudomonas aeruginosa (strain PA7)).